The primary structure comprises 287 residues: uncharacterized protein (287 aa).

Disordered regions lie at residues 109–175, 203–223, and 257–287; these read QEES…SSQD, IPPPTRLISEGPEEPKESQPV, and KESEKSSNETQELSSHSLEEASVHDRISSEE. Residues 110-136 show a composition bias toward low complexity; the sequence is EESSSSLEEGIIEDPVVATPSPASAAP. Over residues 143-152 the composition is skewed to basic and acidic residues; the sequence is RKEFKNEKWK. The segment covering 153-162 has biased composition (basic residues); the sequence is EKKKQGRRRN. A compositionally biased stretch (basic and acidic residues) spans 273–287; it reads SLEEASVHDRISSEE.

It belongs to the chlamydial CPn_0623/CT_504/TC_0791 family.

This is an uncharacterized protein from Chlamydia muridarum (strain MoPn / Nigg).